The primary structure comprises 548 residues: Chaperonin GroEL (548 aa).

ATP is bound by residues 30–33 (TLGP), Lys51, 87–91 (DGTTT), Gly415, 479–481 (NAA), and Asp495.

The protein belongs to the chaperonin (HSP60) family. Forms a cylinder of 14 subunits composed of two heptameric rings stacked back-to-back. Interacts with the co-chaperonin GroES.

It localises to the cytoplasm. The catalysed reaction is ATP + H2O + a folded polypeptide = ADP + phosphate + an unfolded polypeptide.. Together with its co-chaperonin GroES, plays an essential role in assisting protein folding. The GroEL-GroES system forms a nano-cage that allows encapsulation of the non-native substrate proteins and provides a physical environment optimized to promote and accelerate protein folding. The protein is Chaperonin GroEL of Proteus mirabilis (strain HI4320).